Here is a 473-residue protein sequence, read N- to C-terminus: Flagellum-specific ATP synthase (473 aa).

187–194 is a binding site for ATP; it reads AGSGVGKS.

It belongs to the ATPase alpha/beta chains family.

It is found in the cytoplasm. The enzyme catalyses ATP + H2O + 4 H(+)(in) = ADP + phosphate + 5 H(+)(out). In terms of biological role, probable catalytic subunit of a protein translocase for flagellum-specific export, or a proton translocase involved in local circuits at the flagellum. The polypeptide is Flagellum-specific ATP synthase (fliI) (Agrobacterium fabrum (strain C58 / ATCC 33970) (Agrobacterium tumefaciens (strain C58))).